The sequence spans 305 residues: Diacylglycerol kinase (305 aa).

The region spanning 1–132 (MRKRARIIYN…VDIGKMNSRY (132 aa)) is the DAGKc domain. ATP is bound by residues 10 to 14 (NPTSG), Thr-41, 67 to 73 (GDGTLNE), and Thr-94. Residues Lys-213, Asp-216, and Tyr-218 each coordinate Mg(2+). Glu-273 (proton acceptor) is an active-site residue.

It belongs to the diacylglycerol/lipid kinase family. As to quaternary structure, homodimer. It depends on Mg(2+) as a cofactor.

It carries out the reaction a 1,2-diacyl-sn-glycerol + ATP = a 1,2-diacyl-sn-glycero-3-phosphate + ADP + H(+). In terms of biological role, catalyzes the phosphorylation of diacylglycerol (DAG) into phosphatidic acid. Is a key enzyme involved in the production of lipoteichoic acid by reintroducing DAG formed from the breakdown of membrane phospholipids into the phosphatidylglycerol biosynthetic pathway. The polypeptide is Diacylglycerol kinase (dagK) (Staphylococcus saprophyticus subsp. saprophyticus (strain ATCC 15305 / DSM 20229 / NCIMB 8711 / NCTC 7292 / S-41)).